The primary structure comprises 241 residues: Carboxy-S-adenosyl-L-methionine synthase (241 aa).

Residues Tyr38, 63–65 (GCS), 88–89 (DN), 116–117 (DI), Asn131, and Arg198 each bind S-adenosyl-L-methionine.

Belongs to the class I-like SAM-binding methyltransferase superfamily. Cx-SAM synthase family. In terms of assembly, homodimer.

The enzyme catalyses prephenate + S-adenosyl-L-methionine = carboxy-S-adenosyl-L-methionine + 3-phenylpyruvate + H2O. Its function is as follows. Catalyzes the conversion of S-adenosyl-L-methionine (SAM) to carboxy-S-adenosyl-L-methionine (Cx-SAM). The sequence is that of Carboxy-S-adenosyl-L-methionine synthase from Actinobacillus pleuropneumoniae serotype 3 (strain JL03).